The sequence spans 499 residues: Cytochrome P450 71A27 (499 aa).

Residues methionine 3–leucine 23 form a helical membrane-spanning segment. Residue cysteine 438 participates in heme binding.

It belongs to the cytochrome P450 family. It depends on heme as a cofactor.

The protein resides in the membrane. The chain is Cytochrome P450 71A27 (CYP71A27) from Arabidopsis thaliana (Mouse-ear cress).